Consider the following 334-residue polypeptide: Serpentine receptor class alpha-11 (334 aa).

Residues 1–23 lie on the Extracellular side of the membrane; it reads MTTNNPVCASDAHMEMYSSKLYT. Residues 24-44 traverse the membrane as a helical segment; sequence SALFLNLIIATTSMILTGFAI. The Cytoplasmic portion of the chain corresponds to 45–57; sequence QKLFMESIINIST. Residues 58-80 traverse the membrane as a helical segment; the sequence is RMFLFCGLMCCSLHQTAYIVLRI. The Extracellular portion of the chain corresponds to 81–105; sequence QVIYQVFFKLSEPCNLYYPAIDCKY. Residues 106-126 form a helical membrane-spanning segment; that stretch reads VTFSLVAGNTGMIFIQSAMTI. At 127–145 the chain is on the cytoplasmic side; it reads DRIFATIFPKLWPKLKYWP. The helical transmembrane segment at 146–166 threads the bilayer; the sequence is GVVLSILMIACNYANVQIIFW. At 167–191 the chain is on the extracellular side; sequence GDPLTEYVPTCGQFPSKSVNRFQTF. Residues 192–212 form a helical membrane-spanning segment; the sequence is LAIALYMSIAHMVINVIILYI. Over 213-239 the chain is Cytoplasmic; that stretch reads NVLQDRQQSKSFNVNQRYQSREALKSS. A helical transmembrane segment spans residues 240–260; that stretch reads QAIFFLSMSQFFACLIYSVFT. Residues 261-277 are Extracellular-facing; that stretch reads KVFLEFQLNLSPLQSGL. Residues 278–298 form a helical membrane-spanning segment; that stretch reads VLALSYTTPYACIAIPSLIIF. Residues 299-334 lie on the Cytoplasmic side of the membrane; the sequence is TFRFIKNQRLRNINELRSQTETGDECMRKIAKIWEK.

This sequence belongs to the nematode receptor-like protein sra family. As to expression, expressed in interneurons AIY and AVB in L1 larvae. In adults, strong expression is seen in AIY and AIA but only weak expression in AVB.

The protein resides in the membrane. In terms of biological role, a G protein-coupled receptor required for olfactory imprinting a requisite in ordorant response such as benzaldehyde and isoamylalcohol. The chain is Serpentine receptor class alpha-11 (sra-11) from Caenorhabditis elegans.